The following is a 346-amino-acid chain: Tetraacyldisaccharide 4'-kinase (346 aa).

54-61 (TVGGAGKT) contacts ATP.

The protein belongs to the LpxK family.

It carries out the reaction a lipid A disaccharide + ATP = a lipid IVA + ADP + H(+). The protein operates within glycolipid biosynthesis; lipid IV(A) biosynthesis; lipid IV(A) from (3R)-3-hydroxytetradecanoyl-[acyl-carrier-protein] and UDP-N-acetyl-alpha-D-glucosamine: step 6/6. Functionally, transfers the gamma-phosphate of ATP to the 4'-position of a tetraacyldisaccharide 1-phosphate intermediate (termed DS-1-P) to form tetraacyldisaccharide 1,4'-bis-phosphate (lipid IVA). The polypeptide is Tetraacyldisaccharide 4'-kinase (Rhizobium meliloti (strain 1021) (Ensifer meliloti)).